Consider the following 443-residue polypeptide: Anthocyanidin 3-O-glucoside 5-O-glucosyltransferase 2 (443 aa).

Positions 1–22 (MVRRRVLLATFPAQGHINPALQ) are cleaved as a signal peptide. The Proton acceptor role is filled by H16. H16 is an an anthocyanidin binding site. Residues Q340, H355, W358, N359, S360, E363, D379, and Q380 each coordinate UDP-alpha-D-glucose.

The protein belongs to the UDP-glycosyltransferase family.

It carries out the reaction an anthocyanidin 3-O-beta-D-glucoside + UDP-alpha-D-glucose = an anthocyanidin 3,5-di-O-beta-D-glucoside + UDP + 2 H(+). It participates in pigment biosynthesis; anthocyanin biosynthesis. Catalyzes the glucosylation at the O-5 position of anthocyanidin 3-glucosides to form anthocyanidin 3,5-di-O-glucosides using UDP-glucose as sugar donor. Anthocyanidin 3,5-di-O-glucosides are molecules that are responsible for pigmentation. Also acts on anthocyanidin 3-O-(6-O-malonylglucoside). Much less active with hydroxycinnamoylglucose derivatives. No activity in the absence of the 3-O-glucoside group. This Perilla frutescens (Beefsteak mint) protein is Anthocyanidin 3-O-glucoside 5-O-glucosyltransferase 2 (PF3R6).